The chain runs to 846 residues: Translation initiation factor IF-2 (846 aa).

The disordered stretch occupies residues 198-219 (YKREEEEKKSKAKKAGGKGFKK). The segment covering 207–219 (SKAKKAGGKGFKK) has biased composition (basic residues). Residues 345–512 (SRAPVVTIMG…AVLLQSEVLE (168 aa)) form the tr-type G domain. The tract at residues 354–361 (GHVDHGKT) is G1. 354–361 (GHVDHGKT) lines the GTP pocket. The interval 379–383 (GITQH) is G2. Residues 400 to 403 (DTPG) are G3. Residues 400–404 (DTPGH) and 454–457 (NKID) each bind GTP. The segment at 454-457 (NKID) is G4. Positions 490–492 (SAK) are G5.

The protein belongs to the TRAFAC class translation factor GTPase superfamily. Classic translation factor GTPase family. IF-2 subfamily.

It is found in the cytoplasm. In terms of biological role, one of the essential components for the initiation of protein synthesis. Protects formylmethionyl-tRNA from spontaneous hydrolysis and promotes its binding to the 30S ribosomal subunits. Also involved in the hydrolysis of GTP during the formation of the 70S ribosomal complex. The protein is Translation initiation factor IF-2 of Francisella tularensis subsp. holarctica (strain OSU18).